The primary structure comprises 129 residues: Small ribosomal subunit protein uS11 (129 aa).

As to quaternary structure, part of the 30S ribosomal subunit. Interacts with proteins S7 and S18. Binds to IF-3. Post-translationally, may be methylated on an undetermined residue.

In terms of biological role, located on the platform of the 30S subunit, it bridges several disparate RNA helices of the 16S rRNA. Forms part of the Shine-Dalgarno cleft in the 70S ribosome. In Rhodopseudomonas palustris (strain ATCC BAA-98 / CGA009), this protein is Small ribosomal subunit protein uS11.